A 1128-amino-acid polypeptide reads, in one-letter code: Major DNA-binding protein (1128 aa).

The tract at residues 1104-1128 is required for nuclear localization; sequence LGGGGQGSGGRRKRRLATVLPGLEV.

This sequence belongs to the herpesviridae major DNA-binding protein family. As to quaternary structure, homooligomers. Forms double-helical filaments necessary for the formation of replication compartments within the host nucleus. Interacts with the origin-binding protein. Interacts with the helicase primase complex; this interaction stimulates primer synthesis activity of the helicase-primase complex. Interacts with the DNA polymerase. Interacts with the alkaline exonuclease; this interaction increases its nuclease processivity.

It is found in the virion tegument. The protein localises to the host nucleus. Functionally, plays several crucial roles in viral infection. Participates in the opening of the viral DNA origin to initiate replication by interacting with the origin-binding protein. May disrupt loops, hairpins and other secondary structures present on ssDNA to reduce and eliminate pausing of viral DNA polymerase at specific sites during elongation. Promotes viral DNA recombination by performing strand-transfer, characterized by the ability to transfer a DNA strand from a linear duplex to a complementary single-stranded DNA circle. Can also catalyze the renaturation of complementary single strands. Additionally, reorganizes the host cell nucleus, leading to the formation of prereplicative sites and replication compartments. This process is driven by the protein which can form double-helical filaments in the absence of DNA. The chain is Major DNA-binding protein from Homo sapiens (Human).